Here is a 226-residue protein sequence, read N- to C-terminus: MDFRTLAKRIIMTLLALLILPYLLIPVYALPFIRPVSTLMLADLVTLQGYDRRWVPLEDISPRLVQSVMMSEDGQFCFHGGVDWNQMQSVVSNALDGASTRGASTIPMQTAKNLFLWNGRSFLRKGLELPLAIAADFVWSKKRMMEIYLNVAEWGPGIYGIEAAAQHHFKIPAAKLSSRQAALLAVSLPNPIDRVASKPGRGLQRLAGLIERRARASGGYVGCVLD.

The chain crosses the membrane as a helical span at residues 10 to 30; it reads IIMTLLALLILPYLLIPVYAL.

The protein belongs to the glycosyltransferase 51 family.

The protein localises to the cell inner membrane. It carries out the reaction [GlcNAc-(1-&gt;4)-Mur2Ac(oyl-L-Ala-gamma-D-Glu-L-Lys-D-Ala-D-Ala)](n)-di-trans,octa-cis-undecaprenyl diphosphate + beta-D-GlcNAc-(1-&gt;4)-Mur2Ac(oyl-L-Ala-gamma-D-Glu-L-Lys-D-Ala-D-Ala)-di-trans,octa-cis-undecaprenyl diphosphate = [GlcNAc-(1-&gt;4)-Mur2Ac(oyl-L-Ala-gamma-D-Glu-L-Lys-D-Ala-D-Ala)](n+1)-di-trans,octa-cis-undecaprenyl diphosphate + di-trans,octa-cis-undecaprenyl diphosphate + H(+). Its pathway is cell wall biogenesis; peptidoglycan biosynthesis. In terms of biological role, peptidoglycan polymerase that catalyzes glycan chain elongation from lipid-linked precursors. The chain is Biosynthetic peptidoglycan transglycosylase from Agrobacterium fabrum (strain C58 / ATCC 33970) (Agrobacterium tumefaciens (strain C58)).